A 423-amino-acid chain; its full sequence is Pentamidine resistance factor, mitochondrial (423 aa).

A helical transmembrane segment spans residues Pro199–Phe219.

In terms of assembly, interacts with COX18. This interaction may be essential for its insertion into mitochondrial inner membrane.

The protein resides in the mitochondrion inner membrane. Functionally, probably involved in mitochondrial export. Confers resistance to the anti-pneumocystis carinii drug pentamidine. May act by the removal of pentamidine, or its damage targets, from the matrix by an active-transport mechanism. The sequence is that of Pentamidine resistance factor, mitochondrial (PNT1) from Saccharomyces cerevisiae (strain ATCC 204508 / S288c) (Baker's yeast).